The chain runs to 72 residues: Translation initiation factor IF-1 (72 aa).

The S1-like domain maps to 1-72 (MAKDDVIQMQ…SRARIVFRAK (72 aa)).

It belongs to the IF-1 family. As to quaternary structure, component of the 30S ribosomal translation pre-initiation complex which assembles on the 30S ribosome in the order IF-2 and IF-3, IF-1 and N-formylmethionyl-tRNA(fMet); mRNA recruitment can occur at any time during PIC assembly.

The protein resides in the cytoplasm. One of the essential components for the initiation of protein synthesis. Stabilizes the binding of IF-2 and IF-3 on the 30S subunit to which N-formylmethionyl-tRNA(fMet) subsequently binds. Helps modulate mRNA selection, yielding the 30S pre-initiation complex (PIC). Upon addition of the 50S ribosomal subunit IF-1, IF-2 and IF-3 are released leaving the mature 70S translation initiation complex. In Burkholderia mallei (strain NCTC 10247), this protein is Translation initiation factor IF-1.